Reading from the N-terminus, the 1357-residue chain is DNA-directed RNA polymerase subunit beta (1357 aa).

This sequence belongs to the RNA polymerase beta chain family. The RNAP catalytic core consists of 2 alpha, 1 beta, 1 beta' and 1 omega subunit. When a sigma factor is associated with the core the holoenzyme is formed, which can initiate transcription.

It carries out the reaction RNA(n) + a ribonucleoside 5'-triphosphate = RNA(n+1) + diphosphate. In terms of biological role, DNA-dependent RNA polymerase catalyzes the transcription of DNA into RNA using the four ribonucleoside triphosphates as substrates. This is DNA-directed RNA polymerase subunit beta from Hahella chejuensis (strain KCTC 2396).